A 144-amino-acid chain; its full sequence is Peptide methionine sulfoxide reductase MsrB (144 aa).

A MsrB domain is found at 6–128 (KDELKKKLTP…NSAALRFIPK (123 aa)). The active-site Nucleophile is the cysteine 117.

The protein belongs to the MsrB Met sulfoxide reductase family.

The catalysed reaction is L-methionyl-[protein] + [thioredoxin]-disulfide + H2O = L-methionyl-(R)-S-oxide-[protein] + [thioredoxin]-dithiol. This chain is Peptide methionine sulfoxide reductase MsrB, found in Shouchella clausii (strain KSM-K16) (Alkalihalobacillus clausii).